We begin with the raw amino-acid sequence, 270 residues long: Replication protein A 32 kDa subunit (270 aa).

Residue Met1 is modified to N-acetylmethionine. Phosphoserine; by PRKDC is present on residues Ser4 and Ser8. Thr21 bears the Phosphothreonine; by PRKDC mark. Residues 21–41 are disordered; sequence TQSPGGFGSPAPSQAEKKSRA. Position 23 is a phosphoserine; by CDK2 (Ser23). Ser29 is modified (phosphoserine; by CDK1). The residue at position 33 (Ser33) is a Phosphoserine; by PRKDC. Residues Lys37 and Lys38 each participate in a glycyl lysine isopeptide (Lys-Gly) (interchain with G-Cter in ubiquitin) cross-link. The segment at residues 74 to 148 is a DNA-binding region (OB); sequence VTIVGIIRHA…KSLVAFKIMP (75 aa). The segment at 187–270 is interaction with RAD52, TIPIN, UNG and XPA; it reads GMSEAGNFGG…DDHFKSTDAE (84 aa).

Belongs to the replication factor A protein 2 family. As to quaternary structure, component of the replication protein A complex (RPA/RP-A), a heterotrimeric complex composed of RPA1, RPA2 and RPA3. Interacts with PRPF19; the PRP19-CDC5L complex is recruited to the sites of DNA repair where it ubiquitinates the replication protein A complex (RPA). Interacts with SERTAD3. Interacts with TIPIN. Interacts with TIMELESS. Interacts with PPP4R2; the interaction is direct, DNA damage-dependent and mediates the recruitment of the PP4 catalytic subunit PPP4C. Interacts (hyperphosphorylated) with RAD51. Interacts with SMARCAL1; the interaction is direct and mediates the recruitment to the RPA complex of SMARCAL1. Interacts with RAD52 and XPA; those interactions are direct and associate RAD52 and XPA to the RPA complex. Interacts with FBH1. Interacts with ETAA1; the interaction is direct and promotes ETAA1 recruitment at stalled replication forks. Interacts with RFWD3. Interacts with DDI2. Interacts (in unphosphorylated form via N-terminus) with EIF4EBP3; the interaction enhances EIF4EBP3-mediated inhibition of EIF4E-mediated mRNA nuclear export. Interacts with BRIP1/FANCJ via the RPA1 subunit; following DNA damage they colocalize in foci in the nucleus. Interacts with nuclear UNG (isoform 2); this interaction mediates UNG recruitment to RPA-coated single-stranded DNA at stalled replication forks. Post-translationally, differentially phosphorylated throughout the cell cycle, becoming phosphorylated at the G1-S transition and dephosphorylated in late mitosis. Mainly phosphorylated at Ser-23 and Ser-29, by cyclin A-CDK2 and cyclin B-CDK1, respectively during DNA replication and mitosis. Dephosphorylation may require the serine/threonine-protein phosphatase 4. Phosphorylation at Ser-23 and Ser-29 is a prerequisite for further phosphorylation. Becomes hyperphosphorylated on additional residues including Ser-4, Ser-8, Thr-21 and Ser-33 in response to DNA damage. Hyperphosphorylation is mediated by ATM, ATR and PRKDC. Primarily recruited to DNA repair nuclear foci as a hypophosphorylated form it undergoes subsequent hyperphosphorylation, catalyzed by ATR. Hyperphosphorylation is required for RAD51 recruitment to chromatin and efficient DNA repair. Phosphorylation at Thr-21 depends upon RFWD3 presence. DNA damage-induced 'Lys-63'-linked polyubiquitination by PRPF19 mediates ATRIP recruitment to the RPA complex at sites of DNA damage and activation of ATR. Ubiquitinated by RFWD3 at stalled replication forks in response to DNA damage: ubiquitination by RFWD3 does not lead to degradation by the proteasome and promotes removal of the RPA complex from stalled replication forks, promoting homologous recombination.

It is found in the nucleus. Its subcellular location is the PML body. As part of the heterotrimeric replication protein A complex (RPA/RP-A), binds and stabilizes single-stranded DNA intermediates that form during DNA replication or upon DNA stress. It prevents their reannealing and in parallel, recruits and activates different proteins and complexes involved in DNA metabolism. Thereby, it plays an essential role both in DNA replication and the cellular response to DNA damage. In the cellular response to DNA damage, the RPA complex controls DNA repair and DNA damage checkpoint activation. Through recruitment of ATRIP activates the ATR kinase a master regulator of the DNA damage response. It is required for the recruitment of the DNA double-strand break repair factors RAD51 and RAD52 to chromatin in response to DNA damage. Also recruits to sites of DNA damage proteins like XPA and XPG that are involved in nucleotide excision repair and is required for this mechanism of DNA repair. Also plays a role in base excision repair (BER) probably through interaction with UNG. Also recruits SMARCAL1/HARP, which is involved in replication fork restart, to sites of DNA damage. May also play a role in telomere maintenance. RPA stimulates 5'-3' helicase activity of BRIP1/FANCJ. This is Replication protein A 32 kDa subunit (RPA2) from Homo sapiens (Human).